The primary structure comprises 96 residues: Small ribosomal subunit protein bS6 (96 aa).

The protein belongs to the bacterial ribosomal protein bS6 family.

Functionally, binds together with bS18 to 16S ribosomal RNA. The chain is Small ribosomal subunit protein bS6 from Streptococcus thermophilus (strain ATCC BAA-250 / LMG 18311).